Reading from the N-terminus, the 447-residue chain is N-succinylarginine dihydrolase (447 aa).

Residues 19-28 (GGLAVGNIAS), N110, and 137-138 (HR) each bind substrate. Residue E174 is part of the active site. Substrate is bound at residue R213. H249 is a catalytic residue. D251 and N362 together coordinate substrate. The active-site Nucleophile is the C368.

It belongs to the succinylarginine dihydrolase family. In terms of assembly, homodimer.

The enzyme catalyses N(2)-succinyl-L-arginine + 2 H2O + 2 H(+) = N(2)-succinyl-L-ornithine + 2 NH4(+) + CO2. It participates in amino-acid degradation; L-arginine degradation via AST pathway; L-glutamate and succinate from L-arginine: step 2/5. Functionally, catalyzes the hydrolysis of N(2)-succinylarginine into N(2)-succinylornithine, ammonia and CO(2). In Nitrosospira multiformis (strain ATCC 25196 / NCIMB 11849 / C 71), this protein is N-succinylarginine dihydrolase.